A 153-amino-acid chain; its full sequence is MNYTYDPAEVQYIVRIHNTNIDGTKRIPFALTKIRGIGIRIATAICKRLGIDLRKRAGEMGEDEMKRISDAILDPASVGIPESYMNHQRDIIDGTTSHLIGTRLDADLRMMIERGKKNKRIRAYRLDVGLKVRGQRTKSNGRRGRSMGVSRKK.

Residues 134–153 are disordered; it reads GQRTKSNGRRGRSMGVSRKK.

Belongs to the universal ribosomal protein uS13 family.

Its subcellular location is the cytoplasm. Functionally, located at the top of the head of the 40S subunit, it contacts several helices of the 18S rRNA. In Encephalitozoon cuniculi (strain GB-M1) (Microsporidian parasite), this protein is Small ribosomal subunit protein uS13 (RPS18).